Consider the following 101-residue polypeptide: Putative defensin-like protein 253 (101 aa).

The first 23 residues, 1–23 (MRFASLFVVYCTFMFLDISHVKC), serve as a signal peptide directing secretion. 4 disulfides stabilise this stretch: cysteine 31/cysteine 84, cysteine 41/cysteine 66, cysteine 49/cysteine 76, and cysteine 64/cysteine 78.

It belongs to the DEFL family.

The protein resides in the secreted. The protein is Putative defensin-like protein 253 (SCRL15) of Arabidopsis thaliana (Mouse-ear cress).